Reading from the N-terminus, the 320-residue chain is Methyltransferase gedG (320 aa).

The tract at residues 61-154 (DAGAGNGVYS…QLRPGGTFAC (94 aa)) is methyltransferase domain. Residues 231–252 (GLLPPERRGEVTEPDHEGPHDQ) are disordered. The span at 235–252 (PERRGEVTEPDHEGPHDQ) shows a compositional bias: basic and acidic residues.

Belongs to the methyltransferase superfamily.

Its pathway is secondary metabolite biosynthesis. Methyltransferase; part of the gene cluster that mediates the biosynthesis of geodin, an intermediate in the biosynthesis of other natural products. The pathway begins with the synthesis of atrochrysone thioester by the polyketide synthase (PKS) gedC. The atrochrysone carboxyl ACP thioesterase gedB then breaks the thioester bond and releases the atrochrysone carboxylic acid from gedC. The atrochrysone carboxylic acid is then converted to atrochrysone which is further transformed into emodinanthrone. The next step is performed by the emodinanthrone oxygenase gedH that catalyzes the oxidation of emodinanthrone to emodin. Emodin O-methyltransferase encoded probably by gedA then catalyzes methylation of the 8-hydroxy group of emodin to form questin. Ring cleavage of questin by questin oxidase gedK leads to desmethylsulochrin via several intermediates including questin epoxide. Another methylation step probably catalyzed by methyltransferase gedG leads to the formation of sulochrin which is further converted to dihydrogeodin by the sulochrin halogenase gedL. Finally, the dihydrogeodin oxidase gedJ catalyzes the stereospecific phenol oxidative coupling reaction converting dihydrogeodin to geodin. The polypeptide is Methyltransferase gedG (Aspergillus terreus (strain NIH 2624 / FGSC A1156)).